Consider the following 333-residue polypeptide: MIDTTLPLTDIHRHLDGNIRPQTILELGRQYNISLPAQSLETLIPHVQVIANEPDLVSFLTKLDWGVKVLASLDACRRVAFENIEDAARHGLHYVELRFSPGYMAMAHQLPVAGVVEAVIDGVCEGCRTFGVQAKLIGIMSRTFGEAACQQELEAFLAHRDQITALDLAGDELGFPGSLFLSHFNRARDAGWHITVHAGEAAGPESIWQAIRELGAERIGHGVKAIEDRALMDFLAEQQIGIESCLTSNIQTSTVAELAAHPLKMFLEHGIRASINTDDPGVQGVDIIHEYTVAAPAAGLSREQIRQAQINGLEMAFLSAEEKRALREKVAAK.

Residues histidine 12 and histidine 14 each contribute to the Zn(2+) site. Substrate contacts are provided by histidine 14, aspartate 16, and glycine 170. A Zn(2+)-binding site is contributed by histidine 197. Glutamate 200 (proton donor) is an active-site residue. Residue aspartate 278 coordinates Zn(2+). Position 279 (aspartate 279) interacts with substrate.

This sequence belongs to the metallo-dependent hydrolases superfamily. Adenosine and AMP deaminases family. Adenosine deaminase subfamily. Requires Zn(2+) as cofactor.

The enzyme catalyses adenosine + H2O + H(+) = inosine + NH4(+). The catalysed reaction is 2'-deoxyadenosine + H2O + H(+) = 2'-deoxyinosine + NH4(+). In terms of biological role, catalyzes the hydrolytic deamination of adenosine and 2-deoxyadenosine. The chain is Adenosine deaminase from Escherichia coli O7:K1 (strain IAI39 / ExPEC).